The sequence spans 362 residues: Caveolae-associated protein 4 (362 aa).

Positions 1–24 are disordered; that stretch reads MEHNGSASNAGKIHQNRLSSVTED. The stretch at 100 to 120 forms a coiled coil; that stretch reads IKDVKARVEKQQVRVTKVETK. Residues Ser152, Ser171, and Ser172 each carry the phosphoserine modification. Residues 227–255 are compositionally biased toward basic and acidic residues; it reads PERRERLRQSGERLRQSGERLRQSGERFK. Residues 227–261 form a disordered region; sequence PERRERLRQSGERLRQSGERLRQSGERFKKSISNA. The residue at position 324 (Tyr324) is a Phosphotyrosine. At Thr334 the chain carries Phosphothreonine. Ser353 carries the phosphoserine modification.

Belongs to the CAVIN family. Component of the CAVIN complex composed of CAVIN1, CAVIN2, CAVIN3 and CAVIN4. Interacts with CAVIN1, CAV3, ADRA1A and ADRA1B. Interacts with CAVIN2; this augments the transactivation of NPPA. Interacts with MAPK1 and MAPK3. As to expression, expressed at much higher levels in cardiomyocytes than in non-cardiomyocytes.

It is found in the cytoplasm. The protein resides in the myofibril. The protein localises to the sarcomere. Its subcellular location is the cytosol. It localises to the cell membrane. It is found in the sarcolemma. The protein resides in the membrane. The protein localises to the caveola. Its function is as follows. Modulates the morphology of formed caveolae in cardiomyocytes, but is not required for caveolar formation. Facilitates the recruitment of MAPK1/3 to caveolae within cardiomyocytes and regulates alpha-1 adrenergic receptor-induced hypertrophic responses in cardiomyocytes through MAPK1/3 activation. Contributes to proper membrane localization and stabilization of caveolin-3 (CAV3) in cardiomyocytes. Induces RHOA activation and activates NPPA transcription and myofibrillar organization through the Rho/ROCK signaling pathway. The polypeptide is Caveolae-associated protein 4 (Rattus norvegicus (Rat)).